Consider the following 274-residue polypeptide: NH(3)-dependent NAD(+) synthetase (274 aa).

Residue 46-53 coordinates ATP; sequence GISGGQDS. D52 contacts Mg(2+). R140 contributes to the deamido-NAD(+) binding site. Position 160 (T160) interacts with ATP. Residue E165 coordinates Mg(2+). K173 and D180 together coordinate deamido-NAD(+). ATP contacts are provided by K189 and T211. 260–261 lines the deamido-NAD(+) pocket; it reads HK.

The protein belongs to the NAD synthetase family. In terms of assembly, homodimer.

It catalyses the reaction deamido-NAD(+) + NH4(+) + ATP = AMP + diphosphate + NAD(+) + H(+). It functions in the pathway cofactor biosynthesis; NAD(+) biosynthesis; NAD(+) from deamido-NAD(+) (ammonia route): step 1/1. In terms of biological role, catalyzes the ATP-dependent amidation of deamido-NAD to form NAD. Uses ammonia as a nitrogen source. The protein is NH(3)-dependent NAD(+) synthetase of Lactococcus lactis subsp. cremoris (strain MG1363).